Consider the following 427-residue polypeptide: Trigger factor (427 aa).

In terms of domain architecture, PPIase FKBP-type spans 163–248 (GDTVVIDFVG…IHEVKAKEVP (86 aa)).

This sequence belongs to the FKBP-type PPIase family. Tig subfamily.

The protein localises to the cytoplasm. It carries out the reaction [protein]-peptidylproline (omega=180) = [protein]-peptidylproline (omega=0). In terms of biological role, involved in protein export. Acts as a chaperone by maintaining the newly synthesized protein in an open conformation. Functions as a peptidyl-prolyl cis-trans isomerase. This chain is Trigger factor, found in Streptococcus suis (strain 05ZYH33).